A 376-amino-acid chain; its full sequence is D-alanine--D-alanine ligase (376 aa).

The ATP-grasp domain occupies 150 to 358 (KIIFEKEGLP…YSELINKLIE (209 aa)). An ATP-binding site is contributed by 183 to 238 (EGRLTYPCFVKPSNAGSSVGVNKASDRESLVKALNIAAKNDRRILVEEFINGREIE). Mg(2+)-binding residues include Asp-311, Glu-325, and Asn-327.

This sequence belongs to the D-alanine--D-alanine ligase family. Mg(2+) serves as cofactor. It depends on Mn(2+) as a cofactor.

The protein localises to the cytoplasm. The catalysed reaction is 2 D-alanine + ATP = D-alanyl-D-alanine + ADP + phosphate + H(+). It participates in cell wall biogenesis; peptidoglycan biosynthesis. Functionally, cell wall formation. In Ruminiclostridium cellulolyticum (strain ATCC 35319 / DSM 5812 / JCM 6584 / H10) (Clostridium cellulolyticum), this protein is D-alanine--D-alanine ligase.